The following is a 228-amino-acid chain: Eukaryotic translation initiation factor 6 (228 aa).

Belongs to the eIF-6 family. In terms of assembly, monomer. Associates with the 60S ribosomal subunit.

It is found in the cytoplasm. The protein localises to the nucleus. It localises to the nucleolus. Functionally, binds to the 60S ribosomal subunit and prevents its association with the 40S ribosomal subunit to form the 80S initiation complex in the cytoplasm. May also be involved in ribosome biogenesis. This chain is Eukaryotic translation initiation factor 6, found in Guillardia theta (Cryptophyte).